The chain runs to 497 residues: Acetyltransferase FGR3 (497 aa).

Ca(2+) contacts are provided by Asp-221 and Ile-224. CoA is bound by residues Lys-255 and Asp-303. Asp-386 contacts Ca(2+). Residue Thr-396 coordinates CoA. Asp-462 contributes to the Ca(2+) binding site. The segment at 477–497 (DASEAKKANGTNGTNGVNGSS) is disordered. The span at 485–497 (NGTNGTNGVNGSS) shows a compositional bias: low complexity.

Belongs to the trichothecene 3-O-acetyltransferase family.

The protein operates within secondary metabolite biosynthesis. Functionally, acetyltransferase; part of the gene cluster that mediates the biosynthesis of the tetraketides fugralins such as linear fugralin A and cyclic fugralin B, volatile compounds that play a role in the asexual reproductive cycle but are not involved in pathogenicity. One of the key features of fugralins is the presence of a double methyl group, which is only rarely encountered in fungal secondary metabolites. As the fugralins cluster does not contain an independent methyltransferase, the PKS FGR1 is probably responsible for adding two methyl groups to the same carbon atom. Fugralin B is similar to fugralin A except for a cyclization between the carboxylic acid C-8 and the alcohol on C-4 resulting in a six membered lactone ring, probably catalyzed by the cyclase FGR4. The exact role of the individual cluster genes remains unknown and further work is needed to unravel the biosynthetic pathway. The sequence is that of Acetyltransferase FGR3 from Gibberella zeae (strain ATCC MYA-4620 / CBS 123657 / FGSC 9075 / NRRL 31084 / PH-1) (Wheat head blight fungus).